A 1019-amino-acid chain; its full sequence is Probable ubiquitination network signaling protein acrB (1019 aa).

The disordered stretch occupies residues 1 to 142; sequence MPRSSATARK…TGNKRSPSNA (142 aa). Low complexity predominate over residues 33-63; sequence NGHLNGNLNGGSASSSLSSSQVDLPSSRSSS. Polar residues-rich tracts occupy residues 68 to 83, 102 to 117, and 131 to 142; these read PTTTATSTKLNGTPDS, TDMSYVQNNGVASQTG, and SATGNKRSPSNA. Helical transmembrane passes span 163-183, 216-236, and 259-279; these read IAILIFLLQLPPMVLTLVQFL, LGTMIAMDGFCLLIWGLFMWT, and FGKNGGVNTLCVGIVLIMHLV. 5 disordered regions span residues 343-372, 580-603, 831-859, 879-905, and 963-1019; these read ARRSMAKNRTPNPPRTGKRIDTEASAGSQT, DAEQVSSVSTPPQPSYRPSSPTTT, LDPGPLTPEGNLPGTNPFSESALPLGALT, SPLQTASSPVGASSSHPTSPVQQPSYL, and DKRS…GKTN. Residues 602-788 are a coiled coil; it reads TTLKNSIVNA…REQDQAKLEA (187 aa). Positions 992 to 1008 are enriched in gly residues; the sequence is RGSGSGSNGSGGSGSGS.

It belongs to the acrB family.

It localises to the membrane. Functionally, component of the regulatory network controlling carbon source utilization through ubiquitination and deubiquitination involving creA, creB, creC, creD and acrB. Involved in resistance to acriflavine, and required for normal growth on a range of sole carbon sources, including fructose, cellobiose, raffinose, and starch, and reduced utilization of amino acids, including GABA and beta-alanine, as sole carbon and nitrogen sources. This is Probable ubiquitination network signaling protein acrB (acrB) from Neosartorya fischeri (strain ATCC 1020 / DSM 3700 / CBS 544.65 / FGSC A1164 / JCM 1740 / NRRL 181 / WB 181) (Aspergillus fischerianus).